The primary structure comprises 88 residues: Large ribosomal subunit protein bL27 (88 aa).

A disordered region spans residues 1–24 (MAHKKGTGSTRNGRDSNSKRLGVK).

It belongs to the bacterial ribosomal protein bL27 family.

The polypeptide is Large ribosomal subunit protein bL27 (Synechococcus sp. (strain CC9311)).